The following is a 277-amino-acid chain: Thymidylate synthase (277 aa).

Arg21 provides a ligand contact to dUMP. His51 is a (6R)-5,10-methylene-5,6,7,8-tetrahydrofolate binding site. Residue 139 to 140 (RR) participates in dUMP binding. The active-site Nucleophile is Cys159. DUMP-binding positions include 179-182 (RSAD), Asn190, and 220-222 (HIY). (6R)-5,10-methylene-5,6,7,8-tetrahydrofolate is bound at residue Asp182. Ala276 is a binding site for (6R)-5,10-methylene-5,6,7,8-tetrahydrofolate.

Belongs to the thymidylate synthase family. Bacterial-type ThyA subfamily. In terms of assembly, homodimer.

Its subcellular location is the cytoplasm. It carries out the reaction dUMP + (6R)-5,10-methylene-5,6,7,8-tetrahydrofolate = 7,8-dihydrofolate + dTMP. The protein operates within pyrimidine metabolism; dTTP biosynthesis. In terms of biological role, catalyzes the reductive methylation of 2'-deoxyuridine-5'-monophosphate (dUMP) to 2'-deoxythymidine-5'-monophosphate (dTMP) while utilizing 5,10-methylenetetrahydrofolate (mTHF) as the methyl donor and reductant in the reaction, yielding dihydrofolate (DHF) as a by-product. This enzymatic reaction provides an intracellular de novo source of dTMP, an essential precursor for DNA biosynthesis. This is Thymidylate synthase from Ruegeria sp. (strain TM1040) (Silicibacter sp.).